A 264-amino-acid polypeptide reads, in one-letter code: Small ribosomal subunit protein eS1B (264 aa).

Positions 1–19 (MALGKNKRISKGGKRGKRG) are enriched in basic residues. The disordered stretch occupies residues 1–23 (MALGKNKRISKGGKRGKRGKAQE).

Belongs to the eukaryotic ribosomal protein eS1 family. Component of the small ribosomal subunit. Mature ribosomes consist of a small (40S) and a large (60S) subunit. The 40S subunit contains about 33 different proteins and 1 molecule of RNA (18S). The 60S subunit contains about 49 different proteins and 3 molecules of RNA (25S, 5.8S and 5S).

Its subcellular location is the cytoplasm. This is Small ribosomal subunit protein eS1B from Leishmania infantum.